A 453-amino-acid chain; its full sequence is Methylenetetrahydrofolate--tRNA-(uracil-5-)-methyltransferase TrmFO (453 aa).

Position 10–15 (10–15 (GGGLAG)) interacts with FAD. The interval 433–453 (ELAPWIDSAPPTAVPAAPAAG) is disordered. A compositionally biased stretch (low complexity) spans 441–453 (APPTAVPAAPAAG).

Belongs to the MnmG family. TrmFO subfamily. FAD serves as cofactor.

Its subcellular location is the cytoplasm. It carries out the reaction uridine(54) in tRNA + (6R)-5,10-methylene-5,6,7,8-tetrahydrofolate + NADH + H(+) = 5-methyluridine(54) in tRNA + (6S)-5,6,7,8-tetrahydrofolate + NAD(+). The catalysed reaction is uridine(54) in tRNA + (6R)-5,10-methylene-5,6,7,8-tetrahydrofolate + NADPH + H(+) = 5-methyluridine(54) in tRNA + (6S)-5,6,7,8-tetrahydrofolate + NADP(+). In terms of biological role, catalyzes the folate-dependent formation of 5-methyl-uridine at position 54 (M-5-U54) in all tRNAs. This is Methylenetetrahydrofolate--tRNA-(uracil-5-)-methyltransferase TrmFO from Anaeromyxobacter dehalogenans (strain 2CP-1 / ATCC BAA-258).